Here is a 377-residue protein sequence, read N- to C-terminus: Nitric oxide reductase FlRd-NAD(+) reductase (377 aa).

This sequence belongs to the FAD-dependent oxidoreductase family. It depends on FAD as a cofactor.

The protein resides in the cytoplasm. The catalysed reaction is 2 reduced [nitric oxide reductase rubredoxin domain] + NAD(+) + H(+) = 2 oxidized [nitric oxide reductase rubredoxin domain] + NADH. The protein operates within nitrogen metabolism; nitric oxide reduction. One of at least two accessory proteins for anaerobic nitric oxide (NO) reductase. Reduces the rubredoxin moiety of NO reductase. The polypeptide is Nitric oxide reductase FlRd-NAD(+) reductase (Salmonella enteritidis PT4 (strain P125109)).